The sequence spans 574 residues: VAO-type flavoprotein oxidase VAO615 (574 aa).

The N-terminal stretch at 1 to 17 is a signal peptide; the sequence is MPASLLRFLALAGTAVG. 4 disulfide bridges follow: cysteine 28–cysteine 572, cysteine 64–cysteine 77, cysteine 108–cysteine 118, and cysteine 450–cysteine 476. Asparagine 47 is a glycosylation site (N-linked (GlcNAc...) asparagine). The N-linked (GlcNAc...) asparagine glycan is linked to asparagine 105. The FAD-binding PCMH-type domain occupies 120–299; sequence LGNYPSYVVN…LSMTARLHRD (180 aa). N-linked (GlcNAc...) asparagine glycosylation is found at asparagine 129, asparagine 211, asparagine 310, asparagine 346, and asparagine 438. A cross-link (6-(S-cysteinyl)-8alpha-(pros-histidyl)-FAD (His-Cys)) is located at residues 157 to 222; sequence HDYLGKSTGK…TGHRIVGGTC (66 aa).

This sequence belongs to the oxygen-dependent FAD-linked oxidoreductase family. It depends on FAD as a cofactor. Post-translationally, the FAD cofactor is bound via a bicovalent 6-S-cysteinyl, 8alpha-N1-histidyl FAD linkage.

It localises to the secreted. Its function is as follows. Probably oxidoreductase that, when reduced, rapidly reacts with molecular oxygen, a hallmark of flavoprotein oxidases. A large panel of alcohols, including carbohydrates, steroids and secondary alcohols were tested as potential substrates, but none has been identified so far. This is VAO-type flavoprotein oxidase VAO615 from Thermothelomyces thermophilus (strain ATCC 42464 / BCRC 31852 / DSM 1799) (Sporotrichum thermophile).